The chain runs to 1148 residues: Alpha-mannosidase 2 (1148 aa).

The Cytoplasmic portion of the chain corresponds to 1–5 (MKLSR). Residues 6 to 26 (QFTVFGSAIFCVVIFSLYLML) form a helical; Signal-anchor for type II membrane protein membrane-spanning segment. The Lumenal portion of the chain corresponds to 27 to 1148 (DRGHLDYPRG…EISTSRIRLR (1122 aa)). Residues Ser-80 and Ser-82 each carry the phosphoserine modification. N-linked (GlcNAc...) asparagine glycosylation occurs at Asn-93. 4 residues coordinate Zn(2+): His-174, Asp-176, Asp-288, and His-568. Asp-288 (nucleophile) is an active-site residue. Positions 1121 to 1148 (MHSPPDAQNTSEVSLSPMEISTSRIRLR) are disordered.

This sequence belongs to the glycosyl hydrolase 38 family. Homodimer; disulfide-linked. The cofactor is Zn(2+). In terms of processing, glycosylated. Liver.

It localises to the golgi apparatus membrane. It carries out the reaction N(4)-{beta-D-GlcNAc-(1-&gt;2)-alpha-D-Man-(1-&gt;3)-[alpha-D-Man-(1-&gt;3)-[alpha-D-Man-(1-&gt;6)]-alpha-D-Man-(1-&gt;6)]-beta-D-Man-(1-&gt;4)-beta-D-GlcNAc-(1-&gt;4)-beta-D-GlcNAc}-L-asparaginyl-[protein] + 2 H2O = 2 alpha-D-mannopyranose + an N(4)-{beta-D-GlcNAc-(1-&gt;2)-alpha-D-Man-(1-&gt;3)-[alpha-D-Man-(1-&gt;6)]-beta-D-Man-(1-&gt;4)-beta-D-GlcNAc-(1-&gt;4)-beta-D-GlcNAc}-L-asparaginyl-[protein]. It functions in the pathway protein modification; protein glycosylation. Its activity is regulated as follows. Inhibited by swainsonine. In terms of biological role, catalyzes the first committed step in the biosynthesis of complex N-glycans. It controls conversion of high mannose to complex N-glycans; the final hydrolytic step in the N-glycan maturation pathway. In Rattus norvegicus (Rat), this protein is Alpha-mannosidase 2 (Man2a1).